Here is a 436-residue protein sequence, read N- to C-terminus: ABC transporter permease YtrF (436 aa).

An N-terminal signal peptide occupies residues 1 to 31; it reads MRFKDQVHFIRRNMKKNRLRVFMTILATTMA. A lipid anchor (N-palmitoyl cysteine) is attached at Cys-32. Cys-32 carries the S-diacylglycerol cysteine lipid modification. Residues 115–165 adopt a coiled-coil conformation; it reads NMNDELKANMELEKGRVAKSENEIVVGYDFAKRLLTKKESEEYNKKIEEAK. 3 helical membrane passes run 293–313, 350–370, and 396–416; these read FKIG…IGIF, YIGI…SYLV, and IPAS…VISG.

It belongs to the ABC-4 integral membrane protein family. The complex is composed of 2 ATP-binding proteins (YtrB and YtrE), 2 transmembrane proteins (YtrC and YtrD) and a solute-binding protein (YtrF).

Its subcellular location is the cell membrane. Part of the ABC transporter complex YtrBCDEF that plays a role in acetoin utilization during stationary phase and sporulation. The chain is ABC transporter permease YtrF (ytrF) from Bacillus subtilis (strain 168).